A 455-amino-acid polypeptide reads, in one-letter code: MQAATETIVAIATAQGRGGVGIVRVSGPLAGQMAVAVSGRQLKARHAHYGPFLDAGGQVIDEGLSLYFPGPNSFTGEDVLELQGHGGPVVLDLLVQRCLELGARQARPGEFSERAFLNDKLDLAQAEAIADLIEASSEQAARNALRSLQGEFSRRVHALTEQLISLRIYVEAAIDFPEEEIDFLADGHVLGLLEKVRTELSTVQREASQGALLRDGMTVVIAGRPNAGKSSLLNALAGREAAIVTDIAGTTRDVLREHIHIDGMPLHVVDTAGLRDTEDHVEKIGVERALKAIGEADRVLLVVDATAPEAADPFSLWPEFLDQRPEPGKVTLIRNKADLSTESIGLEESADGHVTITLSARTGAGLELLREHLKACMGFEQTAESGFSARRRHLEALRLAGQALEHGHSQLIHNGAGELLAEDLRQAQQHLGEITGAFTPDDLLGRIFSSFCIGK.

(6S)-5-formyl-5,6,7,8-tetrahydrofolate is bound by residues R24, E81, and K120. Positions 216–378 (GMTVVIAGRP…LREHLKACMG (163 aa)) constitute a TrmE-type G domain. N226 is a K(+) binding site. Residues 226 to 231 (NAGKSS), 245 to 251 (TDIAGTT), 270 to 273 (DTAG), 335 to 338 (NKAD), and 359 to 361 (SAR) contribute to the GTP site. S230 contributes to the Mg(2+) binding site. T245, I247, and T250 together coordinate K(+). T251 contributes to the Mg(2+) binding site. (6S)-5-formyl-5,6,7,8-tetrahydrofolate is bound at residue K455.

This sequence belongs to the TRAFAC class TrmE-Era-EngA-EngB-Septin-like GTPase superfamily. TrmE GTPase family. As to quaternary structure, homodimer. Heterotetramer of two MnmE and two MnmG subunits. Requires K(+) as cofactor.

The protein localises to the cytoplasm. In terms of biological role, exhibits a very high intrinsic GTPase hydrolysis rate. Involved in the addition of a carboxymethylaminomethyl (cmnm) group at the wobble position (U34) of certain tRNAs, forming tRNA-cmnm(5)s(2)U34. This chain is tRNA modification GTPase MnmE, found in Pseudomonas aeruginosa (strain ATCC 15692 / DSM 22644 / CIP 104116 / JCM 14847 / LMG 12228 / 1C / PRS 101 / PAO1).